Here is a 305-residue protein sequence, read N- to C-terminus: UDP-N-acetylenolpyruvoylglucosamine reductase 2 (305 aa).

Positions 33–197 (VGGKADVFVA…LEARFELEEG (165 aa)) constitute an FAD-binding PCMH-type domain. Residue R176 is part of the active site. Residue S226 is the Proton donor of the active site. Residue E296 is part of the active site.

Belongs to the MurB family. FAD serves as cofactor.

The protein resides in the cytoplasm. The catalysed reaction is UDP-N-acetyl-alpha-D-muramate + NADP(+) = UDP-N-acetyl-3-O-(1-carboxyvinyl)-alpha-D-glucosamine + NADPH + H(+). It participates in cell wall biogenesis; peptidoglycan biosynthesis. Its function is as follows. Cell wall formation. The sequence is that of UDP-N-acetylenolpyruvoylglucosamine reductase 2 from Bacillus thuringiensis subsp. konkukian (strain 97-27).